We begin with the raw amino-acid sequence, 324 residues long: tRNA dimethylallyltransferase (324 aa).

Position 17 to 24 (17 to 24) interacts with ATP; sequence GPTASGKT. 19 to 24 serves as a coordination point for substrate; the sequence is TASGKT. Interaction with substrate tRNA stretches follow at residues 42–45, 166–170, 251–256, and 284–291; these read DSAL, QRIQR, RCVGYR, and KRQITWLR.

This sequence belongs to the IPP transferase family. In terms of assembly, monomer. The cofactor is Mg(2+).

It carries out the reaction adenosine(37) in tRNA + dimethylallyl diphosphate = N(6)-dimethylallyladenosine(37) in tRNA + diphosphate. Functionally, catalyzes the transfer of a dimethylallyl group onto the adenine at position 37 in tRNAs that read codons beginning with uridine, leading to the formation of N6-(dimethylallyl)adenosine (i(6)A). This Burkholderia vietnamiensis (strain G4 / LMG 22486) (Burkholderia cepacia (strain R1808)) protein is tRNA dimethylallyltransferase.